Reading from the N-terminus, the 402-residue chain is Protein PMR5 (402 aa).

Residues 7 to 23 (LLGISVVSAIFFLVLQQ) form a helical; Signal-anchor for type II membrane protein membrane-spanning segment. Residues 40–60 (GSSSGSSGNQYSSSRPSAGFQ) form a disordered region. A compositionally biased stretch (low complexity) spans 41 to 56 (SSSGSSGNQYSSSRPS). The short motif at 140 to 142 (GDS) is the GDS motif element. The short motif at 379–393 (DCSHWCLPGLPDTWN) is the DCXHWCLPGXXDXWN motif element.

It belongs to the PC-esterase family. TBL subfamily. In terms of tissue distribution, expressed in flowers, siliques, stems and leaves.

The protein resides in the membrane. In terms of biological role, required for nonhost resistance (NHR) during plant-microbe interactions. Plants mutated in PMR5 are resistant to powdery mildew species. May act as a bridging protein that binds pectin and other cell wall polysaccharides. Probably involved in maintaining esterification of pectins. May be involved in the specific O-acetylation of cell wall polymers. The sequence is that of Protein PMR5 (PMR5) from Arabidopsis thaliana (Mouse-ear cress).